The primary structure comprises 959 residues: General transcription factor II-I repeat domain-containing protein 1 (959 aa).

Residues K27 and K94 each participate in a glycyl lysine isopeptide (Lys-Gly) (interchain with G-Cter in SUMO2) cross-link. Residues 96-106 show a composition bias toward basic and acidic residues; it reads PEAEHPKKVQR. A disordered region spans residues 96-117; that stretch reads PEAEHPKKVQRGEGGGRSLPRS. The stretch at 119 to 213 is one GTF2I-like 1 repeat; sequence LEHGSDVYLL…LEDGGRDSKA (95 aa). Residues K184, K212, K225, K238, K271, K294, K308, K337, K436, K439, and K443 each participate in a glycyl lysine isopeptide (Lys-Gly) (interchain with G-Cter in SUMO2) cross-link. Residues 230 to 250 are disordered; sequence CGLHGQAPKVPPQDLPPTATS. Residues 342–436 form a GTF2I-like 2 repeat; that stretch reads IKETEDINTL…FDERIFTGNK (95 aa). S448 is modified (phosphoserine). The segment at 468 to 492 is disordered; the sequence is NARSDKGSMSEDCGPGTSGELGGLR. One copy of the GTF2I-like 3 repeat lies at 556 to 650; that stretch reads DSHGDVIRPL…ELLTEGVKEP (95 aa). Glycyl lysine isopeptide (Lys-Gly) (interchain with G-Cter in SUMO2) cross-links involve residues K567, K579, K588, K622, K638, and K648. The residue at position 654 (S654) is a Phosphoserine. The tract at residues 654–679 is disordered; sequence SQGTASSLGFSPPALPPERDSGDPLV. Residues P669, P670, D680, and K684 each participate in a glycyl lysine isopeptide (Lys-Gly) (interchain with G-Cter in SUMO2) cross-link. Position 686 is a phosphoserine (Q686). 2 GTF2I-like repeats span residues 696 to 790 and 793 to 887; these read LSRI…KPDE and ANRL…ICND. Residues I701, K724, K732, K772, K774, K787, K829, K889, and K893 each participate in a glycyl lysine isopeptide (Lys-Gly) (interchain with G-Cter in SUMO2) cross-link. A disordered region spans residues 892-927; the sequence is AKDSSIPKRKRKRVSEGNSVSSSSSSSSSSSSNPDS. Positions 898–905 match the Nuclear localization signal motif; sequence PKRKRKRV. Residues 910-923 show a composition bias toward low complexity; it reads SVSSSSSSSSSSSS.

Belongs to the TFII-I family. Interacts with the retinoblastoma protein (RB1) via its C-terminus. As to expression, highly expressed in adult skeletal muscle, heart, fibroblast, bone and fetal tissues. Expressed at lower levels in all other tissues tested.

It localises to the nucleus. Its function is as follows. May be a transcription regulator involved in cell-cycle progression and skeletal muscle differentiation. May repress GTF2I transcriptional functions, by preventing its nuclear residency, or by inhibiting its transcriptional activation. May contribute to slow-twitch fiber type specificity during myogenesis and in regenerating muscles. Binds troponin I slow-muscle fiber enhancer (USE B1). Binds specifically and with high affinity to the EFG sequences derived from the early enhancer of HOXC8. This is General transcription factor II-I repeat domain-containing protein 1 (GTF2IRD1) from Homo sapiens (Human).